The primary structure comprises 517 residues: DNA-binding protein (517 aa).

Residues 1–10 show a composition bias toward polar residues; the sequence is MASRGGNQSS. The disordered stretch occupies residues 1–110; the sequence is MASRGGNQSS…DISQDSEEER (110 aa). A compositionally biased stretch (low complexity) spans 64–80; that stretch reads VLVSETSRSSLSPERSN. Residues 87-96 show a composition bias toward basic residues; sequence PKKKPRKTKH. Y180 carries the phosphotyrosine; by host modification. Positions 269 and 271 each coordinate Zn(2+). Positions 282-316 are flexible loop; that stretch reads IEMDVASENGQRAMKENPDRAKITQNRWGRNVVQL. Zn(2+) is bound by residues C324, C340, C382, C384, C436, and C453. Residues 501–517 form a C-terminal arm, DBP binding region; that stretch reads VSLPAGHYDSRQNPFDF.

This sequence belongs to the adenoviridae E2A DNA-binding protein family. As to quaternary structure, homomultimerizes on viral ssDNA bound to pTP. Forms a initiation complex with viral polymerase, pTP and hosts NFIA and POU2F1/OCT1. Interacts with host SRCAP.

The protein resides in the host nucleus. In terms of biological role, plays a role in the elongation phase of viral strand displacement replication by unwinding the template in an ATP-independent fashion, employing its capacity to form multimers. Also enhances the rate of initiation. Released from template upon second strand synthesis. Assembles in complex with viral pTP, viral pol, host NFIA and host POU2F1/OCT1 on viral origin of replication. Covers the whole ssDNA genome during synthesis. The complementary strand synthesis induces its relese from DNA template. May inhibit cellular transcription mediated by the interaction between host SRCAP and CBP. In Human adenovirus B serotype 7 (HAdV-7), this protein is DNA-binding protein.